The chain runs to 235 residues: Probable transcriptional regulatory protein CJJ81176_1187 (235 aa).

This sequence belongs to the TACO1 family.

It is found in the cytoplasm. The polypeptide is Probable transcriptional regulatory protein CJJ81176_1187 (Campylobacter jejuni subsp. jejuni serotype O:23/36 (strain 81-176)).